The primary structure comprises 668 residues: SHC SH2 domain-binding protein 1 (668 aa).

Residue Ala2 is modified to N-acetylalanine. Ser31, Ser44, and Ser273 each carry phosphoserine. PbH1 repeat units lie at residues 428 to 451 (GMDVKISGIKFIQHDSVEGILIIH), 452 to 473 (HGKTTLENCVLQCETTGVTVRT), 474 to 496 (SAELFMKNSDVYGAKGAGIEIYP), 497 to 518 (GSKCTLTDNGIHHCKEGILIKD), and 526 to 548 (IPKISMINNVIHNNEGYGVVLVK). Residue Ser630 is modified to Phosphoserine.

In terms of assembly, interacts directly with isoform p52shc of SHC1 via its SH2 domain. Interacts with TRIM71; leading to enhanced SHCBP1 protein stability. Interacts with both members of the centralspindlin complex, KIF23 and RACGAP1. In terms of tissue distribution, expressed in spleen, lung and heart with higher expression in testis. No expression in brain, liver and skeletal muscle. Elevated expression in actively cycling cells.

It localises to the midbody. The protein resides in the cytoplasm. The protein localises to the cytoskeleton. It is found in the spindle. In terms of biological role, may play a role in signaling pathways governing cellular proliferation, cell growth and differentiation. May be a component of a novel signaling pathway downstream of Shc. Acts as a positive regulator of FGF signaling in neural progenitor cells. The protein is SHC SH2 domain-binding protein 1 (Shcbp1) of Mus musculus (Mouse).